Consider the following 336-residue polypeptide: Glyceraldehyde-3-phosphate dehydrogenase (336 aa).

NAD(+) is bound by residues 12–13 (RI), D34, R78, and T121. D-glyceraldehyde 3-phosphate is bound by residues 151–153 (SCT), T182, R199, 212–213 (TG), and R235. Residue C152 is the Nucleophile of the active site. N316 contacts NAD(+).

Belongs to the glyceraldehyde-3-phosphate dehydrogenase family. In terms of assembly, homotetramer.

The protein resides in the cytoplasm. It catalyses the reaction D-glyceraldehyde 3-phosphate + phosphate + NAD(+) = (2R)-3-phospho-glyceroyl phosphate + NADH + H(+). It functions in the pathway carbohydrate degradation; glycolysis; pyruvate from D-glyceraldehyde 3-phosphate: step 1/5. In terms of biological role, also binds human plasminogen. Functionally, catalyzes the oxidative phosphorylation of glyceraldehyde 3-phosphate (G3P) to 1,3-bisphosphoglycerate (BPG) using the cofactor NAD. The first reaction step involves the formation of a hemiacetal intermediate between G3P and a cysteine residue, and this hemiacetal intermediate is then oxidized to a thioester, with concomitant reduction of NAD to NADH. The reduced NADH is then exchanged with the second NAD, and the thioester is attacked by a nucleophilic inorganic phosphate to produce BPG. The chain is Glyceraldehyde-3-phosphate dehydrogenase (gap) from Streptococcus pyogenes.